Reading from the N-terminus, the 195-residue chain is Interferon tau (195 aa).

Residues 1–23 form the signal peptide; the sequence is MAFMLSLLMALVLVSYGLGGSLG. Cystine bridges form between C52–C162 and C87–C109.

It belongs to the alpha/beta interferon family. IFN-alphaII subfamily.

The protein resides in the secreted. Paracrine hormone primarily responsible for maternal recognition of pregnancy. Interacts with endometrial receptors, probably type I interferon receptors, and blocks estrogen receptor expression, preventing the estrogen-induced increase in oxytocin receptor expression in the endometrium. This results in the suppression of the pulsatile endometrial release of the luteolytic hormone prostaglandin F2-alpha, hindering the regression of the corpus luteum (luteolysis) and therefore a return to ovarian cyclicity. This, and a possible direct effect of IFN-tau on prostaglandin synthesis, leads in turn to continued ovarian progesterone secretion, which stimulates the secretion by the endometrium of the nutrients required for the growth of the conceptus. In summary, displays particularly high antiviral and antiproliferative potency concurrently with particular weak cytotoxicity, high antiluteolytic activity and immunomodulatory properties. In contrast with other IFNs, IFN-tau is not virally inducible. The sequence is that of Interferon tau (IFNT) from Giraffa camelopardalis (Giraffe).